The following is a 151-amino-acid chain: Calcium-binding protein SPEC 2C (151 aa).

EF-hand domains lie at 10 to 45 (EQRKVFKSSFKSIDADGDGKITPEELKAAFKSIEIE), 46 to 78 (LTQEKIDEMMSMVDKDGSRPVDFSEILMKKAEQ), 81 to 116 (GKGAQYFKAFDALDTDKSGSLSPEELRTALSACTDP), and 118 to 151 (MTKEEIDAIIKKADGNNDGEIRRAEFVRMIQSSY). Residues aspartate 23, aspartate 25, aspartate 27, lysine 29, glutamate 34, aspartate 59, aspartate 61, serine 63, glutamate 70, aspartate 94, aspartate 96, serine 98, serine 100, glutamate 105, aspartate 131, aspartate 135, glutamate 137, and glutamate 142 each coordinate Ca(2+).

As to expression, found in cell lineages giving rise to the aboral ectoderm, a squamous epithelium covering the surface of the late stage embryo and larva.

Functionally, calcium-binding protein involved in larval development and metamorphosis. Likely to function as calcium buffers mediating the transport of calcium from the sea water to the blastocoel where calcium is required for skeleton formation. The protein is Calcium-binding protein SPEC 2C (SPEC2C) of Strongylocentrotus purpuratus (Purple sea urchin).